We begin with the raw amino-acid sequence, 614 residues long: Vitamin B12 transporter BtuB (614 aa).

The N-terminal stretch at 1–20 (MIKKASLLTACSVTAFSAWA) is a signal peptide. Topologically, residues 21–157 (QDTSPDTLVV…NIITTRDEPG (137 aa)) are periplasmic. The short motif at 26 to 33 (DTLVVTAN) is the TonB box element. In terms of domain architecture, TBDR plug spans 38–152 (PRSTVLAPTT…IGGVVNIITT (115 aa)). Residues Leu-83, Ser-85, Asn-92, and 110–111 (VS) each bind cyanocob(III)alamin. In terms of domain architecture, TBDR beta-barrel spans 155–614 (EPGTEISAGW…EYTLSGSYTF (460 aa)). The chain crosses the membrane as a beta stranded span at residues 158-165 (TEISAGWG). At 166–168 (SNS) the chain is on the extracellular side. The beta stranded transmembrane segment at 169–178 (YQNYDVSTQQ) threads the bilayer. Over 179–183 (QLGDK) the chain is Periplasmic. Residues 184–195 (TRVTLLGDYAHT) traverse the membrane as a beta stranded segment. Residues 196 to 216 (HGYDVVAYGNTGTQAQTDNDG) are Extracellular-facing. Ca(2+) is bound by residues Asp-199, Gln-211, Asp-213, and Asp-215. A beta stranded transmembrane segment spans residues 217 to 227 (FLSKTLYGALE). Over 228 to 231 (HNFT) the chain is Periplasmic. Residues 232–248 (DAWSGFVRGYGYDNRTN) traverse the membrane as a beta stranded segment. Positions 249 and 250 each coordinate Ca(2+). The Extracellular portion of the chain corresponds to 249 to 262 (YDAYYSPGSPLLDT). Cyanocob(III)alamin is bound at residue Ala-251. Asp-261 is a binding site for Ca(2+). A beta stranded membrane pass occupies residues 263–277 (RKLYSQSWDAGLRYN). A topological domain (periplasmic) is located at residue Gly-278. Residues 279–296 (ELIKSQLITSYSHSKDYN) form a beta stranded membrane-spanning segment. The Extracellular segment spans residues 297-308 (YDPHYGRYDSSA). Residue Thr-309 participates in cyanocob(III)alamin binding. Residues 309-325 (TLDEMKQYTVQWANNVI) traverse the membrane as a beta stranded segment. Over 326–327 (VG) the chain is Periplasmic. Residues 328–337 (HGSIGAGVDW) traverse the membrane as a beta stranded segment. The Extracellular segment spans residues 338–352 (QKQTTTPGTGYVEDG). The chain crosses the membrane as a beta stranded span at residues 353 to 369 (YDQRNTGIYLTGLQQVG). Residue Asp-370 is a topological domain, periplasmic. Residues 371-381 (FTFEGAARSDD) form a beta stranded membrane-spanning segment. The Extracellular portion of the chain corresponds to 382–384 (NSQ). The beta stranded transmembrane segment at 385-400 (FGRHGTWQTSAGWEFI) threads the bilayer. Topologically, residues 401–402 (EG) are periplasmic. A beta stranded membrane pass occupies residues 403–417 (YRFIASYGTSYKAPN). The Extracellular portion of the chain corresponds to 418–433 (LGQLYGFYGNPNLDPE). The beta stranded transmembrane segment at 434–443 (KSKQWEGAFE) threads the bilayer. Topologically, residues 444-448 (GLTAG) are periplasmic. A beta stranded membrane pass occupies residues 449 to 458 (VNWRISGYRN). The Extracellular segment spans residues 459-472 (DVSDLIDYDDHTLK). The beta stranded transmembrane segment at 473 to 490 (YYNEGKARIKGVEATANF) threads the bilayer. Residues 491–493 (DTG) are Periplasmic-facing. A beta stranded membrane pass occupies residues 494–509 (PLTHTVSYDYVDARNA). At 510 to 516 (ITDTPLL) the chain is on the extracellular side. Arg-517 is a binding site for cyanocob(III)alamin. A beta stranded transmembrane segment spans residues 517-529 (RRAKQQVKYQLDW). Topologically, residues 530-534 (QLYDF) are periplasmic. A beta stranded membrane pass occupies residues 535–550 (DWGITYQYLGTRYDKD). Position 551 (Tyr-551) interacts with cyanocob(III)alamin. Residues 551 to 557 (YSSYPYQ) are Extracellular-facing. A beta stranded transmembrane segment spans residues 558 to 572 (TVKMGGVSLWDLAVA). Residues 573-584 (YPVTSHLTVRGK) lie on the Periplasmic side of the membrane. The chain crosses the membrane as a beta stranded span at residues 585–596 (IANLFDKDYETV). Residues 597-601 (YGYQT) are Extracellular-facing. Positions 597–614 (YGYQTAGREYTLSGSYTF) match the TonB C-terminal box motif. Residues 602-614 (AGREYTLSGSYTF) form a beta stranded membrane-spanning segment.

It belongs to the TonB-dependent receptor family. BtuB (TC 1.B.14.3.1) subfamily. In terms of assembly, interacts with TonB. As to quaternary structure, (Microbial infection) The hairpin motif of the receptor-binding domain of colicin E3 (ColE3) interacts with BtuB without displacing BtuB's central plug. An N-terminal fragment of E3 binds OmpF; trimeric complexes with ColE3, BtuB and OmpF can be cross-linked and immunoprecipitated.

Its subcellular location is the cell outer membrane. Calcium increases vitamin B12 binding affinity by a factor of 50-100. Its activity is regulated as follows. (Microbial infection) Colicins E1, E3 and K inhibit cyanocobalamin (CN-B12) uptake; E1 and E3 inhibit binding of CN-B12 to cells while colicin K inhibits a later, energy-dependent step of CN-B12. Functionally, involved in the active translocation of vitamin B12 (cyanocobalamin) across the outer membrane to the periplasmic space. It derives its energy for transport by interacting with the trans-periplasmic membrane protein TonB. In terms of biological role, (Microbial infection) Acts as a receptor for bacteriophages BF23 and C1, and for A and E colicins. Cyanocobalamin (CN-B12) in solid medium protects against colicins E1 and E3. Does not act as the translocon for colicin E3 (ColE3). The translocon is OmpF; trimeric complexes with ColE3, BtuB and OmpF can be cross-linked and immunoprecipitated. This is Vitamin B12 transporter BtuB from Escherichia coli (strain K12).